We begin with the raw amino-acid sequence, 513 residues long: Bone morphogenetic protein 6 (513 aa).

The first 20 residues, M1 to S20, serve as a signal peptide directing secretion. Residues C21–R374 constitute a propeptide that is removed on maturation. 3 disordered regions span residues A38–F66, L89–S131, and A145–L200. Residues G98–R121 are compositionally biased toward low complexity. Residues Q158 to R172 show a composition bias toward polar residues. Residues N241, N269, N386, N404, and N454 are each glycosylated (N-linked (GlcNAc...) asparagine). A disordered region spans residues T373 to S398. 3 disulfide bridges follow: C412–C478, C441–C510, and C445–C512.

The protein belongs to the TGF-beta family. In terms of assembly, interacts with SOSTDC1. Interacts (when glycosylated) with type I receptor ACVR1; the interaction may induce HAMP expression. Interacts with type II receptor ACVR2B. Interacts with Hemojuvelin/HJV. Interacts with ERFE; the interaction inhibits BMP-induced transcription of HAMP. Interacts with BMPR1A/ALK3. Forms heterodimers with BMP2 in vitro; the heterodimer then binds to its receptor BMPR1A /ALK3 and may induce HAMP expression. Post-translationally, glycosylated at Asn-454. Glycosylation is crucial for recognition by the activin receptor type I/ACVR1.

The protein resides in the secreted. Growth factor of the TGF-beta superfamily that plays essential roles in many developmental processes including cartilage and bone formation. Also plays an important role in the regulation of HAMP/hepcidin expression and iron metabolism by acting as a ligand for hemojuvelin/HJV. Also acts to promote expression of HAMP, potentially via the interaction with its receptor BMPR1A/ALK3. Initiates the canonical BMP signaling cascade by associating with type I receptor ACVR1 and type II receptor ACVR2B. In turn, ACVR1 propagates signal by phosphorylating SMAD1/5/8 that travel to the nucleus and act as activators and repressors of transcription of target. Can also signal through non-canonical pathway such as TAZ-Hippo signaling cascade to modulate VEGF signaling by regulating VEGFR2 expression. The protein is Bone morphogenetic protein 6 (BMP6) of Homo sapiens (Human).